Reading from the N-terminus, the 142-residue chain is Protein Turandot X (142 aa).

The N-terminal stretch at 1 to 22 is a signal peptide; it reads MGLSIGSLLICVFLGIVPFATA.

It belongs to the Turandot family.

It is found in the secreted. A humoral factor that may play a role in stress tolerance. This Drosophila melanogaster (Fruit fly) protein is Protein Turandot X.